The following is a 161-amino-acid chain: Ribonuclease P protein component (161 aa).

It belongs to the RnpA family. Consists of a catalytic RNA component (M1 or rnpB) and a protein subunit.

The catalysed reaction is Endonucleolytic cleavage of RNA, removing 5'-extranucleotides from tRNA precursor.. Functionally, RNaseP catalyzes the removal of the 5'-leader sequence from pre-tRNA to produce the mature 5'-terminus. It can also cleave other RNA substrates such as 4.5S RNA. The protein component plays an auxiliary but essential role in vivo by binding to the 5'-leader sequence and broadening the substrate specificity of the ribozyme. This chain is Ribonuclease P protein component, found in Helicobacter pylori (strain J99 / ATCC 700824) (Campylobacter pylori J99).